Consider the following 117-residue polypeptide: Putative membrane protein insertion efficiency factor (117 aa).

The protein belongs to the UPF0161 family.

It is found in the cell inner membrane. In terms of biological role, could be involved in insertion of integral membrane proteins into the membrane. This chain is Putative membrane protein insertion efficiency factor, found in Bartonella henselae (strain ATCC 49882 / DSM 28221 / CCUG 30454 / Houston 1) (Rochalimaea henselae).